The chain runs to 215 residues: Ependymin-1 (215 aa).

The N-terminal stretch at 1–20 is a signal peptide; it reads MHTVKLLCVVFSCLCAVAWA. N-linked (GlcNAc...) asparagine glycosylation is found at Asn71 and Asn94.

It belongs to the ependymin family. As to quaternary structure, forms disulfide-linked dimers. In terms of processing, different glycosylation variants are known as EPD-beta and EPD-gamma. Binds calcium through the terminal sialic acids. As to expression, EPDs are synthesized in the meninx and secreted in the cerebrospinal fluid.

The protein resides in the secreted. In terms of biological role, may play a role in neural plasticity. May be involved during axon regeneration. This is Ependymin-1 (epd1) from Carassius auratus (Goldfish).